Consider the following 584-residue polypeptide: Cilia- and flagella-associated protein 184 (584 aa).

Composition is skewed to basic and acidic residues over residues 1 to 18 (MDSHYGDIEGKDRAEEGL), 42 to 57 (PEPKPEPEPTQGREPE), and 67 to 82 (SKAKDSEGIDYAHVEV). The tract at residues 1–243 (MDSHYGDIEG…ASTEEFEWTA (243 aa)) is disordered. Positions 119-146 (DKDEDEDEDEDEDEDEDEDEDEDEDEGE) are enriched in acidic residues. The span at 189–232 (AKEKARESLKKRDSEEIEGTDRERHKSTEEQLHPGEAKEEEKQK) shows a compositional bias: basic and acidic residues. Coiled-coil stretches lie at residues 317 to 470 (LAML…SNVQ) and 530 to 561 (LLGKESLLRDLEEKVEKTEMLNRRLESLKRHH).

It belongs to the CFAP184 family. As to quaternary structure, forms a complex with CFAP263; the interaction is required for functional activity in cilia.

The protein resides in the cell projection. It is found in the cilium. The protein localises to the cytoplasm. Its subcellular location is the cytoskeleton. It localises to the microtubule organizing center. The protein resides in the centrosome. In complex with CFAP263, acts as a regulator of ciliary beating that connects radial spoke 3 (RS3) to the inner dynein arm (IDA) and the nexin-dynein regulatory complex (N-DRC). The complex is positioned parallel to N-DRC and forms a connection between the arch at the base of RS3, the IDA tail and N-DRC. The sequence is that of Cilia- and flagella-associated protein 184 (Cfap184) from Mus musculus (Mouse).